A 364-amino-acid polypeptide reads, in one-letter code: MPNNQLSNATISNTINMSAWQGRTDPEDGELGMRWHQKVLPADQANEEGIMLLGFACDAGVARNKGRTGAYGAPIAIRRALANLAWHHQEPVYDGGDISCDDGNLELAQHRLGEDVCLALRQKHKVIVFGGGHEMAWGTFQGIGAYLLQKQEATESIKAPLNLSEEKTAEPNVKGTAIPTPRVGIINFDAHFDLRNPPSGPQASAGSSGTPFHQIARFCELQHWPFNYACLGLNRGSNTQALYEKADRLGVLYRDDTELTHRTIEQTQAALNTFIAECDYLYLTIDLDVFPACVAPGVSAPAARGVSLEIIEQLMEPILTAKTEQGDSKLLVADLAEYNPRFDIDNQTARLAARLTWTIARAIR.

Mn(2+)-binding residues include His133, Asp189, His191, Asp193, Asp286, and Asp288.

It belongs to the arginase family. Mn(2+) is required as a cofactor.

The catalysed reaction is N-formimidoyl-L-glutamate + H2O = formamide + L-glutamate. It functions in the pathway amino-acid degradation; L-histidine degradation into L-glutamate; L-glutamate from N-formimidoyl-L-glutamate (hydrolase route): step 1/1. Catalyzes the conversion of N-formimidoyl-L-glutamate to L-glutamate and formamide. The polypeptide is Formimidoylglutamase (Photobacterium profundum (strain SS9)).